The sequence spans 521 residues: Adenosylhomocysteinase-like 1 (521 aa).

The tract at residues 1 to 92 is disordered; sequence MNNLADTVVV…EKVQKNSKGS (92 aa). A compositionally biased stretch (low complexity) spans 54-73; it reads RSLSASSTDSFSSASYTGSS. Residues Asp220 and Glu245 each contribute to the substrate site. 246 to 248 contributes to the NAD(+) binding site; that stretch reads SVT. Substrate-binding residues include Lys275 and Asp279. NAD(+)-binding positions include 311–316, Glu332, 388–390, Asn435, Lys515, 515–519, and Tyr519; these read GDVGKG, MGH, and KPNYY.

It belongs to the adenosylhomocysteinase family. As to quaternary structure, interacts with Ahcy; the interaction may negatively regulate Ahcy catalytic activity. NAD(+) serves as cofactor.

Its function is as follows. Might play a role in the regulation of methionine metabolism possibly by binding and inactivating Ahcy. In Drosophila melanogaster (Fruit fly), this protein is Adenosylhomocysteinase-like 1.